The chain runs to 275 residues: Formamidopyrimidine-DNA glycosylase (275 aa).

The active-site Schiff-base intermediate with DNA is the P2. Residue E3 is the Proton donor of the active site. The active-site Proton donor; for beta-elimination activity is the K58. DNA contacts are provided by H91, R109, and R154. The FPG-type zinc finger occupies 240–274 (AVYERAGLPCRVCGTPIRRLVQGQRATYYCPSCQK). R264 functions as the Proton donor; for delta-elimination activity in the catalytic mechanism.

It belongs to the FPG family. In terms of assembly, monomer. It depends on Zn(2+) as a cofactor.

The catalysed reaction is Hydrolysis of DNA containing ring-opened 7-methylguanine residues, releasing 2,6-diamino-4-hydroxy-5-(N-methyl)formamidopyrimidine.. It carries out the reaction 2'-deoxyribonucleotide-(2'-deoxyribose 5'-phosphate)-2'-deoxyribonucleotide-DNA = a 3'-end 2'-deoxyribonucleotide-(2,3-dehydro-2,3-deoxyribose 5'-phosphate)-DNA + a 5'-end 5'-phospho-2'-deoxyribonucleoside-DNA + H(+). In terms of biological role, involved in base excision repair of DNA damaged by oxidation or by mutagenic agents. Acts as a DNA glycosylase that recognizes and removes damaged bases. Has a preference for oxidized purines, such as 7,8-dihydro-8-oxoguanine (8-oxoG). Has AP (apurinic/apyrimidinic) lyase activity and introduces nicks in the DNA strand. Cleaves the DNA backbone by beta-delta elimination to generate a single-strand break at the site of the removed base with both 3'- and 5'-phosphates. In Bordetella petrii (strain ATCC BAA-461 / DSM 12804 / CCUG 43448), this protein is Formamidopyrimidine-DNA glycosylase.